The sequence spans 122 residues: Large ribosomal subunit protein bL12 (122 aa).

It belongs to the bacterial ribosomal protein bL12 family. In terms of assembly, homodimer. Part of the ribosomal stalk of the 50S ribosomal subunit. Forms a multimeric L10(L12)X complex, where L10 forms an elongated spine to which 2 to 4 L12 dimers bind in a sequential fashion. Binds GTP-bound translation factors.

In terms of biological role, forms part of the ribosomal stalk which helps the ribosome interact with GTP-bound translation factors. Is thus essential for accurate translation. The chain is Large ribosomal subunit protein bL12 from Streptococcus thermophilus (strain ATCC BAA-491 / LMD-9).